The chain runs to 139 residues: Acidic phospholipase A2 BpPLA2-TXI (139 aa).

Positions 1–16 (MRTLWIMAVLLVGVEG) are cleaved as a signal peptide. Residues C44 and C60 are joined by a disulfide bond. Positions 45 and 47 each coordinate Ca(2+). H63 is an active-site residue. Position 64 (D64) interacts with Ca(2+). Intrachain disulfides connect C65–C139, C73–C97, and C91–C102.

This sequence belongs to the phospholipase A2 family. Group II subfamily. D49 sub-subfamily. It depends on Ca(2+) as a cofactor. In terms of tissue distribution, expressed by the venom gland.

Its subcellular location is the secreted. The enzyme catalyses a 1,2-diacyl-sn-glycero-3-phosphocholine + H2O = a 1-acyl-sn-glycero-3-phosphocholine + a fatty acid + H(+). In terms of biological role, PLA2 catalyzes the calcium-dependent hydrolysis of the 2-acyl groups in 3-sn-phosphoglycerides. The polypeptide is Acidic phospholipase A2 BpPLA2-TXI (Bothrops pauloensis (Neuwied's lancehead)).